We begin with the raw amino-acid sequence, 493 residues long: Dipeptide permease D (493 aa).

The Cytoplasmic portion of the chain corresponds to 1–13 (MNKHASQPRAIYY). The helical transmembrane segment at 14–34 (VVALQIWEYFSFYGMRALLIL) threads the bilayer. Residues 35 to 48 (YLTNQLKYNDTHAY) are Periplasmic-facing. The chain crosses the membrane as a helical span at residues 49–69 (ELFSAYCSLVYVTPILGGFLA). The Cytoplasmic portion of the chain corresponds to 70–77 (DKVLGNRM). A helical transmembrane segment spans residues 78–98 (AVMLGALLMAIGHVVLGASEI). At 99-100 (HP) the chain is on the periplasmic side. Residues 101–121 (SFLYLSLAIIVCGYGLFKSNV) form a helical membrane-spanning segment. The Cytoplasmic segment spans residues 122–137 (SCLLGELYEPTDPRRD). The chain crosses the membrane as a helical span at residues 138–158 (GGFSLMYAAGNVGSIIAPIAC). Residues 159–166 (GYAQEEYS) lie on the Periplasmic side of the membrane. Residues 167–187 (WAMGFGLAAVGMIAGLVIFLC) form a helical membrane-spanning segment. Residues 188–211 (GNRHFTHTRGVNKKVLRATNFLLP) are Cytoplasmic-facing. The chain crosses the membrane as a helical span at residues 212-232 (NWGWLLVLLVATPALITILFW). At 233-234 (KE) the chain is on the periplasmic side. The chain crosses the membrane as a helical span at residues 235-255 (WSVYALIVATIIGLGVLAKIY). Residues 256-266 (RKAENQKQRKE) are Cytoplasmic-facing. The chain crosses the membrane as a helical span at residues 267–287 (LGLIVTLTFFSMLFWAFAQQG). Topologically, residues 288–311 (GSSISLYIDRFVNRDMFGYTVPTA) are periplasmic. A helical transmembrane segment spans residues 312 to 332 (MFQSINAFAVMLCGVFLAWVV). Over 333–343 (KESVAGNRTVR) the chain is Cytoplasmic. Residues 344–364 (IWGKFALGLGLMSAGFCILTL) form a helical membrane-spanning segment. Topologically, residues 365–378 (SARWSAMYGHSSLP) are periplasmic. A helical membrane pass occupies residues 379–399 (LMVLGLAVMGFAELFIDPVAM). Topologically, residues 400–412 (SQITRIEIPGVTG) are cytoplasmic. Residues 413 to 433 (VLTGIYMLLSGAIANYLAGVI) form a helical membrane-spanning segment. Residues 434–461 (ADQTSQASFDASGAINYSINAYIEVFDQ) are Periplasmic-facing. A helical membrane pass occupies residues 462–482 (ITWGALACVGLVLMIWLYQAL). Over 483 to 493 (KFRNRALALES) the chain is Cytoplasmic.

It belongs to the major facilitator superfamily. Proton-dependent oligopeptide transporter (POT/PTR) (TC 2.A.17) family. DtpD subfamily.

It is found in the cell inner membrane. Probable proton-dependent permease that transports dipeptides. This chain is Dipeptide permease D (dtpD), found in Escherichia coli (strain K12).